The sequence spans 204 residues: Guanylate kinase (204 aa).

A Guanylate kinase-like domain is found at G5–L184. G12–G19 is an ATP binding site.

It belongs to the guanylate kinase family.

Its subcellular location is the cytoplasm. The enzyme catalyses GMP + ATP = GDP + ADP. Essential for recycling GMP and indirectly, cGMP. The chain is Guanylate kinase (gmk) from Bacillus subtilis (strain 168).